The sequence spans 508 residues: Light-independent protochlorophyllide reductase subunit B (508 aa).

Residue D36 coordinates [4Fe-4S] cluster. Catalysis depends on D294, which acts as the Proton donor. A substrate-binding site is contributed by 429–430 (GM).

It belongs to the ChlB/BchB/BchZ family. Protochlorophyllide reductase is composed of three subunits; ChlL, ChlN and ChlB. Forms a heterotetramer of two ChlB and two ChlN subunits. It depends on [4Fe-4S] cluster as a cofactor.

The catalysed reaction is chlorophyllide a + oxidized 2[4Fe-4S]-[ferredoxin] + 2 ADP + 2 phosphate = protochlorophyllide a + reduced 2[4Fe-4S]-[ferredoxin] + 2 ATP + 2 H2O. It functions in the pathway porphyrin-containing compound metabolism; chlorophyll biosynthesis (light-independent). Functionally, component of the dark-operative protochlorophyllide reductase (DPOR) that uses Mg-ATP and reduced ferredoxin to reduce ring D of protochlorophyllide (Pchlide) to form chlorophyllide a (Chlide). This reaction is light-independent. The NB-protein (ChlN-ChlB) is the catalytic component of the complex. The polypeptide is Light-independent protochlorophyllide reductase subunit B (Acaryochloris marina (strain MBIC 11017)).